The following is a 212-amino-acid chain: MITIALPKGALLKDSISTFKKAGLDFSNALEENNRSLTFESNCKRAKALLVRNGDVPVYVSYGQADLGIVGYDVLRESELKVAKLLDLGFGGCHMSLAVKKNSNYLKPTDLPANCKVASKFIKTARSYFEELNIPVEIVHLTGSVELGPITGMAEAIVDLVATGKTLKENGLIKIDDLYYSTARLIGNPLSMRLDDNHLRDTILSIESTNAL.

The protein belongs to the ATP phosphoribosyltransferase family. Short subfamily. As to quaternary structure, heteromultimer composed of HisG and HisZ subunits.

It localises to the cytoplasm. The catalysed reaction is 1-(5-phospho-beta-D-ribosyl)-ATP + diphosphate = 5-phospho-alpha-D-ribose 1-diphosphate + ATP. Its pathway is amino-acid biosynthesis; L-histidine biosynthesis; L-histidine from 5-phospho-alpha-D-ribose 1-diphosphate: step 1/9. Functionally, catalyzes the condensation of ATP and 5-phosphoribose 1-diphosphate to form N'-(5'-phosphoribosyl)-ATP (PR-ATP). Has a crucial role in the pathway because the rate of histidine biosynthesis seems to be controlled primarily by regulation of HisG enzymatic activity. The polypeptide is ATP phosphoribosyltransferase (Prochlorococcus marinus (strain AS9601)).